A 161-amino-acid polypeptide reads, in one-letter code: Regulator of ribonuclease activity A (161 aa).

The protein belongs to the RraA family. Homotrimer. Binds to both RNA-binding sites in the C-terminal region of Rne and to RhlB.

It is found in the cytoplasm. Functionally, globally modulates RNA abundance by binding to RNase E (Rne) and regulating its endonucleolytic activity. Can modulate Rne action in a substrate-dependent manner by altering the composition of the degradosome. Modulates RNA-binding and helicase activities of the degradosome. The sequence is that of Regulator of ribonuclease activity A from Pectobacterium atrosepticum (strain SCRI 1043 / ATCC BAA-672) (Erwinia carotovora subsp. atroseptica).